A 122-amino-acid chain; its full sequence is Large ribosomal subunit protein uL14 (122 aa).

It belongs to the universal ribosomal protein uL14 family. Part of the 50S ribosomal subunit. Forms a cluster with proteins L3 and L19. In the 70S ribosome, L14 and L19 interact and together make contacts with the 16S rRNA in bridges B5 and B8.

Its function is as follows. Binds to 23S rRNA. Forms part of two intersubunit bridges in the 70S ribosome. This chain is Large ribosomal subunit protein uL14, found in Nostoc punctiforme (strain ATCC 29133 / PCC 73102).